The primary structure comprises 660 residues: Rhamnogalacturonate lyase B (660 aa).

Residues 1–18 (MRLGVCFSLAAAASVARA) form the signal peptide. N-linked (GlcNAc...) asparagine glycosylation is found at asparagine 25, asparagine 109, asparagine 142, and asparagine 284. Positions 446–466 (RLGTPDKSSGEFRHGAARDPT) are disordered. A compositionally biased stretch (basic and acidic residues) spans 453 to 466 (SSGEFRHGAARDPT). N-linked (GlcNAc...) asparagine glycans are attached at residues asparagine 524, asparagine 566, and asparagine 635.

This sequence belongs to the polysaccharide lyase 4 family.

Its subcellular location is the secreted. The enzyme catalyses Endotype eliminative cleavage of L-alpha-rhamnopyranosyl-(1-&gt;4)-alpha-D-galactopyranosyluronic acid bonds of rhamnogalacturonan I domains in ramified hairy regions of pectin leaving L-rhamnopyranose at the reducing end and 4-deoxy-4,5-unsaturated D-galactopyranosyluronic acid at the non-reducing end.. In terms of biological role, pectinolytic enzymes consist of four classes of enzymes: pectin lyase, polygalacturonase, pectin methylesterase and rhamnogalacturonase. Degrades the rhamnogalacturonan I (RG-I) backbone of pectin. Active against linseed rhamnogalacturonan. The chain is Rhamnogalacturonate lyase B (rglB) from Emericella nidulans (strain FGSC A4 / ATCC 38163 / CBS 112.46 / NRRL 194 / M139) (Aspergillus nidulans).